Consider the following 340-residue polypeptide: tRNA N6-adenosine threonylcarbamoyltransferase (340 aa).

Fe cation-binding residues include H114 and H118. Substrate-binding positions include 140 to 144 (TISGG), D173, G186, D190, and N281. D309 lines the Fe cation pocket.

The protein belongs to the KAE1 / TsaD family. Requires Fe(2+) as cofactor.

It is found in the cytoplasm. It catalyses the reaction L-threonylcarbamoyladenylate + adenosine(37) in tRNA = N(6)-L-threonylcarbamoyladenosine(37) in tRNA + AMP + H(+). Required for the formation of a threonylcarbamoyl group on adenosine at position 37 (t(6)A37) in tRNAs that read codons beginning with adenine. Is involved in the transfer of the threonylcarbamoyl moiety of threonylcarbamoyl-AMP (TC-AMP) to the N6 group of A37, together with TsaE and TsaB. TsaD likely plays a direct catalytic role in this reaction. This is tRNA N6-adenosine threonylcarbamoyltransferase from Christiangramia forsetii (strain DSM 17595 / CGMCC 1.15422 / KT0803) (Gramella forsetii).